Consider the following 164-residue polypeptide: Phosphopantetheine adenylyltransferase (164 aa).

Serine 9 contributes to the substrate binding site. ATP is bound by residues 9 to 10 (SF) and histidine 17. Substrate-binding residues include lysine 41, leucine 73, and lysine 87. ATP-binding positions include 88 to 90 (GLR), glutamate 98, and 122 to 128 (YSYLSSS).

It belongs to the bacterial CoaD family. Homohexamer. Mg(2+) is required as a cofactor.

The protein localises to the cytoplasm. It catalyses the reaction (R)-4'-phosphopantetheine + ATP + H(+) = 3'-dephospho-CoA + diphosphate. Its pathway is cofactor biosynthesis; coenzyme A biosynthesis; CoA from (R)-pantothenate: step 4/5. Its function is as follows. Reversibly transfers an adenylyl group from ATP to 4'-phosphopantetheine, yielding dephospho-CoA (dPCoA) and pyrophosphate. The protein is Phosphopantetheine adenylyltransferase of Rhodococcus erythropolis (strain PR4 / NBRC 100887).